The following is a 442-amino-acid chain: tRNA-2-methylthio-N(6)-dimethylallyladenosine synthase (442 aa).

The 119-residue stretch at 2-120 (KKVFIRTFGC…LPKMIVDKET (119 aa)) folds into the MTTase N-terminal domain. Residues C11, C49, C83, C157, C161, and C164 each contribute to the [4Fe-4S] cluster site. The Radical SAM core domain occupies 143–375 (RVEGGAAFVS…NEVIEAETAR (233 aa)). The region spanning 378 to 441 (QTMIGTVQRC…TFSLRGKIVE (64 aa)) is the TRAM domain.

This sequence belongs to the methylthiotransferase family. MiaB subfamily. As to quaternary structure, monomer. It depends on [4Fe-4S] cluster as a cofactor.

The protein resides in the cytoplasm. The enzyme catalyses N(6)-dimethylallyladenosine(37) in tRNA + (sulfur carrier)-SH + AH2 + 2 S-adenosyl-L-methionine = 2-methylsulfanyl-N(6)-dimethylallyladenosine(37) in tRNA + (sulfur carrier)-H + 5'-deoxyadenosine + L-methionine + A + S-adenosyl-L-homocysteine + 2 H(+). In terms of biological role, catalyzes the methylthiolation of N6-(dimethylallyl)adenosine (i(6)A), leading to the formation of 2-methylthio-N6-(dimethylallyl)adenosine (ms(2)i(6)A) at position 37 in tRNAs that read codons beginning with uridine. The sequence is that of tRNA-2-methylthio-N(6)-dimethylallyladenosine synthase from Neisseria gonorrhoeae (strain NCCP11945).